Here is a 531-residue protein sequence, read N- to C-terminus: 2,3-bisphosphoglycerate-independent phosphoglycerate mutase (531 aa).

Mn(2+)-binding residues include Asp-13 and Ser-63. The Phosphoserine intermediate role is filled by Ser-63. Residues His-124, 154 to 155 (RD), Arg-187, Arg-193, 261 to 264 (RPDR), and Lys-342 each bind substrate. Residues Asp-420, His-424, Asp-462, His-463, and His-480 each coordinate Mn(2+).

The protein belongs to the BPG-independent phosphoglycerate mutase family. Monomer. Requires Mn(2+) as cofactor.

The enzyme catalyses (2R)-2-phosphoglycerate = (2R)-3-phosphoglycerate. Its pathway is carbohydrate degradation; glycolysis; pyruvate from D-glyceraldehyde 3-phosphate: step 3/5. Functionally, catalyzes the interconversion of 2-phosphoglycerate and 3-phosphoglycerate. In Mycoplasma capricolum subsp. capricolum (strain California kid / ATCC 27343 / NCTC 10154), this protein is 2,3-bisphosphoglycerate-independent phosphoglycerate mutase.